The primary structure comprises 448 residues: Probable glycine dehydrogenase (decarboxylating) subunit 1 (448 aa).

This sequence belongs to the GcvP family. N-terminal subunit subfamily. In terms of assembly, the glycine cleavage system is composed of four proteins: P, T, L and H. In this organism, the P 'protein' is a heterodimer of two subunits.

The catalysed reaction is N(6)-[(R)-lipoyl]-L-lysyl-[glycine-cleavage complex H protein] + glycine + H(+) = N(6)-[(R)-S(8)-aminomethyldihydrolipoyl]-L-lysyl-[glycine-cleavage complex H protein] + CO2. Its function is as follows. The glycine cleavage system catalyzes the degradation of glycine. The P protein binds the alpha-amino group of glycine through its pyridoxal phosphate cofactor; CO(2) is released and the remaining methylamine moiety is then transferred to the lipoamide cofactor of the H protein. The protein is Probable glycine dehydrogenase (decarboxylating) subunit 1 of Bacillus licheniformis (strain ATCC 14580 / DSM 13 / JCM 2505 / CCUG 7422 / NBRC 12200 / NCIMB 9375 / NCTC 10341 / NRRL NRS-1264 / Gibson 46).